The sequence spans 342 residues: UDP-N-acetylglucosamine transporter YEA4 (342 aa).

Residues 1 to 6 (MWNSLK) lie on the Cytoplasmic side of the membrane. A helical transmembrane segment spans residues 7-27 (AFALVFGGCCSNVITFETLMS). The Lumenal portion of the chain corresponds to 28–35 (NETGSINN). A helical transmembrane segment spans residues 36-56 (LITFCQFLFVTCQGLPEFLDV). Residues 57-61 (HQPFP) are Cytoplasmic-facing. The chain crosses the membrane as a helical span at residues 62-82 (YFKPLKTPLHVYVITVVLFYI). The Lumenal segment spans residues 83–96 (SSTTNNNVFKYNIS). Residues 97–117 (IPIHIVFRCFGTVITMFTCWL) form a helical membrane-spanning segment. The Cytoplasmic portion of the chain corresponds to 118–123 (LNGRKY). A helical membrane pass occupies residues 124-144 (TKIQILSTLFLTIGAIIASLF). Residues 145–168 (KDADFRYQDLKLQAWKIGSDQSVD) are Lumenal-facing. Residues 169-189 (LTFIFGICILVLSSFTSSLLS) form a helical membrane-spanning segment. Residues 190–253 (AYNERTYQKY…GGKILVPREE (64 aa)) lie on the Cytoplasmic side of the membrane. A helical transmembrane segment spans residues 254–274 (TLLLFNVLTQYFCVKGVNILA). The Lumenal portion of the chain corresponds to 275–307 (SKTNALTLSITLLVRKFISLLLSVRLFDNNLSY). The helical transmembrane segment at 308 to 328 (TGYIGVYLVFFGAFIYSLGSI) threads the bilayer. Over 329–342 (HPRQNDKGAIKKSK) the chain is Cytoplasmic.

It belongs to the nucleotide-sugar transporter family. SLC35B subfamily.

It localises to the endoplasmic reticulum. It is found in the endoplasmic reticulum membrane. In terms of biological role, sugar transporter that specifically mediates the transport of UDP-N-acetylglucosamine (UDP-GlcNAc) and is required for cell wall chitin synthesis. The protein is UDP-N-acetylglucosamine transporter YEA4 (YEA4) of Saccharomyces cerevisiae (strain ATCC 204508 / S288c) (Baker's yeast).